Here is a 749-residue protein sequence, read N- to C-terminus: Polyribonucleotide nucleotidyltransferase (749 aa).

D487 and D493 together coordinate Mg(2+). Residues 554–613 (PSTTTIKIDKDKIRDIIGPGGKIIKEICETSGAKIDISDDGTVSVYASDRDKLKVALDKI) enclose the KH domain. Residues 623 to 691 (GEIFNGTVVK…NKGKAKLTIK (69 aa)) enclose the S1 motif domain. The interval 691–749 (KNADKDKSSNNTKPKTNVNNTNKDNSEPEQRRDSSKKRAWNEDNNAETAEVITERKYFN) is disordered. Over residues 699–713 (SNNTKPKTNVNNTNK) the composition is skewed to low complexity. Residues 714–723 (DNSEPEQRRD) are compositionally biased toward basic and acidic residues.

It belongs to the polyribonucleotide nucleotidyltransferase family. It depends on Mg(2+) as a cofactor.

Its subcellular location is the cytoplasm. The catalysed reaction is RNA(n+1) + phosphate = RNA(n) + a ribonucleoside 5'-diphosphate. In terms of biological role, involved in mRNA degradation. Catalyzes the phosphorolysis of single-stranded polyribonucleotides processively in the 3'- to 5'-direction. The sequence is that of Polyribonucleotide nucleotidyltransferase from Rickettsia conorii (strain ATCC VR-613 / Malish 7).